The chain runs to 2033 residues: Envoplakin (2033 aa).

Low complexity predominate over residues 1 to 27 (MFKGLSKGSQGKGSPKGSPAKGSPKGS). Disordered stretches follow at residues 1–37 (MFKG…AATQ) and 65–85 (QQDR…ETGR). The tract at residues 1–841 (MFKGLSKGSQ…LEPTLAVSAP (841 aa)) is globular 1. A 4 X 4 AA tandem repeats of K-G-S-P region spans residues 12–28 (KGSPKGSPAKGSPKGSP). Residues 71 to 84 (SEQSQALQHQQETG) are compositionally biased toward polar residues. A Spectrin repeat occupies 229–330 (YTHLQGCTRQ…LCICQETQLQ (102 aa)). Residues 388–401 (TERATGDLQRRSRD) are compositionally biased toward basic and acidic residues. Disordered regions lie at residues 388 to 418 (TERA…PLHV) and 891 to 916 (SEDI…ESEA). The region spanning 413–470 (QQPLHVDSICDWDSGEVQLLQGERYKLVDNTDPHAWVVQGPGGETKRAPAACFCIPAP) is the SH3 domain. Positions 842 to 1673 (KRPRVAPLQE…AKVSREELSQ (832 aa)) are central fibrous rod domain. Residues 845–1135 (RVAPLQESIQ…AISSVEPKVI (291 aa)) adopt a coiled-coil conformation. Over residues 891 to 902 (SEDIRRTHDAKQ) the composition is skewed to basic and acidic residues. The Plectin 1 repeat unit spans residues 1185–1226 (KQRPKVQLQERVHEIFQVDPETEQEITRLKAKLQEMAGKRSG). The residue at position 1575 (S1575) is a Phosphoserine. Residues 1614–1623 (QEESKLLSQK) show a composition bias toward low complexity. Residues 1614 to 1636 (QEESKLLSQKTESERQKAAQRGQ) form a disordered region. A globular 2 region spans residues 1674–2033 (ETQTRETNLS…ASPTVPRSLR (360 aa)). The stretch at 1678–1713 (RETNLSTKISILEPETGKDMSPYEAYKRGIIDRGQY) is one Plectin 2 repeat. S1799 is modified (phosphoserine). Plectin repeat units lie at residues 1818-1855 (LGLG…PITG), 1856-1893 (QKLL…NTST), 1894-1931 (QRLL…RESV), 1932-1969 (LPHL…EELA), and 1970-2007 (QLLQ…PLSG). S2025 is subject to Phosphoserine.

Belongs to the plakin or cytolinker family. In terms of assembly, may form a homodimer or a heterodimer with PPL. In terms of tissue distribution, exclusively expressed in stratified squamous epithelia.

The protein localises to the cell junction. It localises to the desmosome. It is found in the cornified envelope. The protein resides in the cytoplasm. Its subcellular location is the cytoskeleton. Component of the cornified envelope of keratinocytes. May link the cornified envelope to desmosomes and intermediate filaments. The protein is Envoplakin (EVPL) of Homo sapiens (Human).